The primary structure comprises 569 residues: Oxygen-dependent choline dehydrogenase (569 aa).

FAD is bound at residue 9 to 38 (DYVIIGGGSAGSVLGNRLSEDKDKEVLVLE). The active-site Proton acceptor is His-475.

This sequence belongs to the GMC oxidoreductase family. FAD serves as cofactor.

It catalyses the reaction choline + A = betaine aldehyde + AH2. The enzyme catalyses betaine aldehyde + NAD(+) + H2O = glycine betaine + NADH + 2 H(+). The protein operates within amine and polyamine biosynthesis; betaine biosynthesis via choline pathway; betaine aldehyde from choline (cytochrome c reductase route): step 1/1. Involved in the biosynthesis of the osmoprotectant glycine betaine. Catalyzes the oxidation of choline to betaine aldehyde and betaine aldehyde to glycine betaine at the same rate. This Staphylococcus aureus (strain COL) protein is Oxygen-dependent choline dehydrogenase.